Reading from the N-terminus, the 307-residue chain is MKLIFAGTPEFAAAALRELIAAGHEIALVLTQPDRPAGRGMKLKPSPVKEVALAHGLRVEQPEKLRGNQEAQQMLRDIQADVMVVAAYGLILPQDVLDIPARGCLNIHASLLPRWRGAAPIQRAILAGDDETGITIMQMDVGLDTGDMLSIHPVAIAADETAATLHDKLAACGAQAIVETLGRLDRIVPRKQPEDGVTYAQKLSKAEAEVDWALPAEQVARAIRAYNPAPGAFTQLGGEPLKLWMASAEPGSAEPGAVVSADADGVLVGAGQGLVRVSVLQAAGGKRLAARDFVAGKSLPAGTRLGV.

110–113 (SLLP) lines the (6S)-5,6,7,8-tetrahydrofolate pocket.

This sequence belongs to the Fmt family.

It carries out the reaction L-methionyl-tRNA(fMet) + (6R)-10-formyltetrahydrofolate = N-formyl-L-methionyl-tRNA(fMet) + (6S)-5,6,7,8-tetrahydrofolate + H(+). Functionally, attaches a formyl group to the free amino group of methionyl-tRNA(fMet). The formyl group appears to play a dual role in the initiator identity of N-formylmethionyl-tRNA by promoting its recognition by IF2 and preventing the misappropriation of this tRNA by the elongation apparatus. The sequence is that of Methionyl-tRNA formyltransferase from Chromobacterium violaceum (strain ATCC 12472 / DSM 30191 / JCM 1249 / CCUG 213 / NBRC 12614 / NCIMB 9131 / NCTC 9757 / MK).